A 444-amino-acid polypeptide reads, in one-letter code: ATP-dependent protease ATPase subunit HslU (444 aa).

Residues Ile18, 60–65 (GVGKTE), Asp256, Glu322, and Arg394 each bind ATP.

The protein belongs to the ClpX chaperone family. HslU subfamily. In terms of assembly, a double ring-shaped homohexamer of HslV is capped on each side by a ring-shaped HslU homohexamer. The assembly of the HslU/HslV complex is dependent on binding of ATP.

The protein localises to the cytoplasm. ATPase subunit of a proteasome-like degradation complex; this subunit has chaperone activity. The binding of ATP and its subsequent hydrolysis by HslU are essential for unfolding of protein substrates subsequently hydrolyzed by HslV. HslU recognizes the N-terminal part of its protein substrates and unfolds these before they are guided to HslV for hydrolysis. The polypeptide is ATP-dependent protease ATPase subunit HslU (Klebsiella pneumoniae (strain 342)).